The sequence spans 219 residues: Uracil-DNA glycosylase (219 aa).

Aspartate 62 functions as the Proton acceptor in the catalytic mechanism.

This sequence belongs to the uracil-DNA glycosylase (UDG) superfamily. UNG family.

The protein resides in the cytoplasm. It catalyses the reaction Hydrolyzes single-stranded DNA or mismatched double-stranded DNA and polynucleotides, releasing free uracil.. Excises uracil residues from the DNA which can arise as a result of misincorporation of dUMP residues by DNA polymerase or due to deamination of cytosine. This chain is Uracil-DNA glycosylase, found in Lactococcus lactis subsp. cremoris (strain MG1363).